The sequence spans 385 residues: Isomaltose glucohydrolase (385 aa).

W125 is a binding site for substrate. The active-site Proton acceptor is the D175. E178 acts as the Proton donor in catalysis. E335 (proton acceptor) is an active-site residue.

Belongs to the glycosyl hydrolase 15 family.

The protein resides in the cytoplasm. It carries out the reaction isomaltose + H2O = beta-D-glucose + D-glucose. Involved in the intracellular degradation of the cyclic tetrasaccharide cyclobis-(1-6)-alpha-nigerosyl (CNN) formed extracellularly from starch. Catalyzes the hydrolysis of alpha-1,6-glucosidic linkage from the non-reducing end of isomaltose to yield beta-D-glucose and D-glucose. Can also act on panose and isomaltotriose at a lower rate. It displays low or no activity toward CNN and the general GH15 enzyme substrates such as maltose, soluble starch or dextran. The sequence is that of Isomaltose glucohydrolase from Kribbella flavida (strain DSM 17836 / JCM 10339 / NBRC 14399).